The primary structure comprises 262 residues: WUSCHEL-related homeobox 11 (262 aa).

The span at 1 to 11 (MDGGHSPDRHA) shows a compositional bias: basic and acidic residues. Disordered regions lie at residues 1 to 21 (MDGGHSPDRHAAAAAGEPVRS) and 79 to 115 (RRRQRQLQAQAQAAAAAASSGSPPTASSGGLAPGHAG). Positions 18–82 (PVRSRWTPKP…NRRSRSRRRQ (65 aa)) form a DNA-binding region, homeobox. Residues 84–112 (QLQAQAQAAAAAASSGSPPTASSGGLAPG) show a composition bias toward low complexity.

It belongs to the WUS homeobox family. Interacts with ERF3.

The protein resides in the nucleus. Functionally, transcription factor which may be involved in developmental processes. Promotes the development of crown roots (both initiation and elongation), main components of the fibrous root system, by regulating the expression of genes required for crown root development and hormone-responsive genes involved in cytokinin (e.g. RR1, RR2, RR3 and RR4) and auxin (e.g. IAA5, IAA11, IAA23 and IAA31) signaling. This is WUSCHEL-related homeobox 11 from Oryza sativa subsp. indica (Rice).